A 485-amino-acid polypeptide reads, in one-letter code: Adenosylhomocysteinase (485 aa).

Threonine 64, aspartate 139, and glutamate 205 together coordinate substrate. 206–208 (TTT) is a binding site for NAD(+). 2 residues coordinate substrate: lysine 235 and aspartate 239. NAD(+)-binding positions include asparagine 240, 269–274 (GYGDVG), glutamate 292, asparagine 327, 348–350 (IGH), and asparagine 397.

Belongs to the adenosylhomocysteinase family. As to quaternary structure, homotetramer. Requires NAD(+) as cofactor. In terms of tissue distribution, mainly in floral buds and stems.

The enzyme catalyses S-adenosyl-L-homocysteine + H2O = L-homocysteine + adenosine. It participates in amino-acid biosynthesis; L-homocysteine biosynthesis; L-homocysteine from S-adenosyl-L-homocysteine: step 1/1. Its function is as follows. Adenosylhomocysteine is a competitive inhibitor of S-adenosyl-L-methionine-dependent methyl transferase reactions; therefore adenosylhomocysteinase may play a key role in the control of methylations via regulation of the intracellular concentration of adenosylhomocysteine. The sequence is that of Adenosylhomocysteinase (SAHH) from Petroselinum crispum (Parsley).